The following is a 475-amino-acid chain: Luvungin A synthase CYP716AC1 (475 aa).

Residues 3–23 traverse the membrane as a helical segment; the sequence is FIILSLLLLSLALYSLYYVII. Cys-423 provides a ligand contact to heme.

Belongs to the cytochrome P450 family. It depends on heme as a cofactor. Expressed in flowers, maturing fruits and in juice vesicles.

Its subcellular location is the membrane. It carries out the reaction (21S)-21-acetoxyl-apo-melianone + reduced [NADPH--hemoprotein reductase] + O2 = luvungin A + oxidized [NADPH--hemoprotein reductase] + H2O + H(+). It functions in the pathway secondary metabolite biosynthesis; terpenoid biosynthesis. Functionally, monooxygenase involved in the biosynthesis of limonoids triterpene natural products such as limonin, a compound with insecticidal activity responsible for the bitter taste in citrus. Catalyzes the conversion of (21S)-21-acetoxyl-apo-melianone to luvungin A. The sequence is that of Luvungin A synthase CYP716AC1 from Citrus sinensis (Sweet orange).